The sequence spans 338 residues: DNA-directed RNA polymerase subunit alpha (338 aa).

The segment covering 1–10 (MIQKNWQTLE) has biased composition (polar residues). The segment at 1–24 (MIQKNWQTLEKPSKLDITPGSDPK) is disordered. The interval 1-234 (MIQKNWQTLE…DQLQMFINFE (234 aa)) is alpha N-terminal domain (alpha-NTD). An alpha C-terminal domain (alpha-CTD) region spans residues 250-338 (FNKNLLRKVD…DLAKRLEEPY (89 aa)).

The protein belongs to the RNA polymerase alpha chain family. As to quaternary structure, homodimer. The RNAP catalytic core consists of 2 alpha, 1 beta, 1 beta' and 1 omega subunit. When a sigma factor is associated with the core the holoenzyme is formed, which can initiate transcription.

The catalysed reaction is RNA(n) + a ribonucleoside 5'-triphosphate = RNA(n+1) + diphosphate. Its function is as follows. DNA-dependent RNA polymerase catalyzes the transcription of DNA into RNA using the four ribonucleoside triphosphates as substrates. This chain is DNA-directed RNA polymerase subunit alpha, found in Rhodospirillum centenum (strain ATCC 51521 / SW).